A 669-amino-acid polypeptide reads, in one-letter code: Probable potassium transport system protein Kup (669 aa).

The next 12 helical transmembrane spans lie at 47–67, 86–106, 144–164, 172–192, 206–226, 252–272, 288–308, 326–346, 378–398, 404–424, 435–455, and 460–480; these read VLML…TSPL, VIGI…IKYM, TIIG…TPAI, GLTL…IFVM, IGVI…LLGI, GMAG…GEAL, WFFV…ALLL, ALLP…QALI, IYIP…VLTF, LAAA…ILAF, LLKS…FFGA, and IPHG…LMTT.

Belongs to the HAK/KUP transporter (TC 2.A.72) family.

It is found in the cell inner membrane. It catalyses the reaction K(+)(in) + H(+)(in) = K(+)(out) + H(+)(out). Its function is as follows. Transport of potassium into the cell. Likely operates as a K(+):H(+) symporter. The sequence is that of Probable potassium transport system protein Kup from Bdellovibrio bacteriovorus (strain ATCC 15356 / DSM 50701 / NCIMB 9529 / HD100).